Consider the following 692-residue polypeptide: SH3 domain-containing protein 21 (692 aa).

Residues 1 to 60 (MVQSELQLQPRAGGRAEAASWGDRGNDKGGFGNPDMPSVSPGPQRPPKLSSLAYDSPPDY) form a disordered region. In terms of domain architecture, SH3 spans 65–126 (SHPEAYRVLF…PDNFVLPPPP (62 aa)). 3 disordered regions span residues 132-501 (PRKV…EVLP), 536-605 (PKGG…SQET), and 672-692 (VMQGTQKSQTPRIIHAQTQTY). Over residues 177 to 186 (PSRDSQKLTS) the composition is skewed to basic and acidic residues. Over residues 210–220 (TQTPQQRSVSS) the composition is skewed to polar residues. Composition is skewed to basic and acidic residues over residues 378-396 (VSTRDDTQFHHFSSEEALQ), 490-501 (NEERLLRGEVLP), and 542-582 (SKEE…KEEV). Positions 628-678 (SLRGEVESLRRALELMGVQLERKLTDIWEELKSEKEQRQRLEVQVMQGTQK) form a coiled coil. Residues 673 to 692 (MQGTQKSQTPRIIHAQTQTY) show a composition bias toward polar residues.

This is SH3 domain-containing protein 21 (SH3D21) from Macaca fascicularis (Crab-eating macaque).